The following is a 367-amino-acid chain: Histidinol-phosphate aminotransferase (367 aa).

At Lys-226 the chain carries N6-(pyridoxal phosphate)lysine.

Belongs to the class-II pyridoxal-phosphate-dependent aminotransferase family. Histidinol-phosphate aminotransferase subfamily. Homodimer. The cofactor is pyridoxal 5'-phosphate.

The catalysed reaction is L-histidinol phosphate + 2-oxoglutarate = 3-(imidazol-4-yl)-2-oxopropyl phosphate + L-glutamate. It functions in the pathway amino-acid biosynthesis; L-histidine biosynthesis; L-histidine from 5-phospho-alpha-D-ribose 1-diphosphate: step 7/9. In Aliarcobacter butzleri (strain RM4018) (Arcobacter butzleri), this protein is Histidinol-phosphate aminotransferase.